A 443-amino-acid polypeptide reads, in one-letter code: CBL-interacting protein kinase 29 (443 aa).

In terms of domain architecture, Protein kinase spans 32–292 (YELGGLLGRG…TEEIITHPWF (261 aa)). ATP is bound by residues 38–46 (LGRGASAKV) and Lys61. Asp164 (proton acceptor) is an active-site residue. Residues 182–207 (DFGLGAVADGALHHTLCGTPAYVAPE) form an activation loop region. Positions 313-347 (AKFKTEFKEDDMARDMTAFDILACSPGSDLSGLFG) constitute an NAF domain. Residues 350–379 (PGKERVFVGEPAAAVLSRVEEAGKKEGYMV) form a PPI region.

This sequence belongs to the protein kinase superfamily. CAMK Ser/Thr protein kinase family. SNF1 subfamily. Mn(2+) serves as cofactor.

It carries out the reaction L-seryl-[protein] + ATP = O-phospho-L-seryl-[protein] + ADP + H(+). The catalysed reaction is L-threonyl-[protein] + ATP = O-phospho-L-threonyl-[protein] + ADP + H(+). Its function is as follows. CIPK serine-threonine protein kinases interact with CBL proteins. Binding of a CBL protein to the regulatory NAF domain of CIPK protein lead to the activation of the kinase in a calcium-dependent manner. This chain is CBL-interacting protein kinase 29 (CIPK29), found in Oryza sativa subsp. japonica (Rice).